Here is a 526-residue protein sequence, read N- to C-terminus: Glutamyl-tRNA(Gln) amidotransferase subunit A, mitochondrial (526 aa).

Active-site charge relay system residues include Lys-76 and Ser-171. Ser-195 acts as the Acyl-ester intermediate in catalysis.

This sequence belongs to the amidase family. GatA subfamily. Subunit of the heterotrimeric GatCAB amidotransferase (AdT) complex, composed of A (QRSL1), B (GATB) and C (GATC) subunits.

The protein resides in the mitochondrion. The catalysed reaction is L-glutamyl-tRNA(Gln) + L-glutamine + ATP + H2O = L-glutaminyl-tRNA(Gln) + L-glutamate + ADP + phosphate + H(+). Its function is as follows. Allows the formation of correctly charged Gln-tRNA(Gln) through the transamidation of misacylated Glu-tRNA(Gln) in the mitochondria. The reaction takes place in the presence of glutamine and ATP through an activated gamma-phospho-Glu-tRNA(Gln). The protein is Glutamyl-tRNA(Gln) amidotransferase subunit A, mitochondrial of Canis lupus familiaris (Dog).